Consider the following 221-residue polypeptide: Lipoprotein-releasing system ATP-binding protein LolD (221 aa).

Positions 6-220 (LILKNISKHY…YKLKHGLLNI (215 aa)) constitute an ABC transporter domain. 42-49 (GSSGSGKS) provides a ligand contact to ATP.

It belongs to the ABC transporter superfamily. Lipoprotein translocase (TC 3.A.1.125) family. In terms of assembly, the complex is composed of two ATP-binding proteins (LolD) and two transmembrane proteins (LolC and LolE).

The protein resides in the cell inner membrane. Part of the ABC transporter complex LolCDE involved in the translocation of mature outer membrane-directed lipoproteins, from the inner membrane to the periplasmic chaperone, LolA. Responsible for the formation of the LolA-lipoprotein complex in an ATP-dependent manner. This chain is Lipoprotein-releasing system ATP-binding protein LolD, found in Rickettsia felis (strain ATCC VR-1525 / URRWXCal2) (Rickettsia azadi).